The sequence spans 367 residues: MMLRTEEMILNVGPQHPSTHGVFRLILKIDGEIIQEATPVIGYLHRGTEKIAEGLQYTQIIPYTDRMDYLSAMTNNYVLCHAVETMMGIEVPERAEYLRVLAMELGRIASHLVWWGTYLLDLGATSPFLYAFREREMIINLLNELSGARLTFNYMRIGGVKWDAPDGWIDKVKQFVPYMREKLHGYHELVTGNEIFRQRVTGVGRYTKEEAISYSLSGVNLRSTGVKWDLRKDEPYSIYDRFDFDVPVREGGDCLARYECRMAEIEQSLRIIEQACEQFPPEGPIMGKVPRIIKAPPGETFVRIEAPRGEIGCYIASDGKKEPYRLKFRRPSFYNLQILPKLLKGENLANVIAILGSIDIVLGEVDG.

It belongs to the complex I 49 kDa subunit family. NDH-1 is composed of 14 different subunits. Subunits NuoB, C, D, E, F, and G constitute the peripheral sector of the complex.

The protein localises to the cell membrane. It carries out the reaction a quinone + NADH + 5 H(+)(in) = a quinol + NAD(+) + 4 H(+)(out). Its function is as follows. NDH-1 shuttles electrons from NADH, via FMN and iron-sulfur (Fe-S) centers, to quinones in the respiratory chain. The immediate electron acceptor for the enzyme in this species is believed to be a menaquinone. Couples the redox reaction to proton translocation (for every two electrons transferred, four hydrogen ions are translocated across the cytoplasmic membrane), and thus conserves the redox energy in a proton gradient. This is NADH-quinone oxidoreductase subunit D from Geobacillus kaustophilus (strain HTA426).